A 270-amino-acid chain; its full sequence is 23S rRNA (adenosine(1067)-2'-O)-methyltransferase (270 aa).

S-adenosyl-L-methionine contacts are provided by arginine 135, arginine 165, glycine 218, isoleucine 238, and leucine 247.

It belongs to the class IV-like SAM-binding methyltransferase superfamily. RNA methyltransferase TsnR/AvirB family.

It carries out the reaction adenosine(1067) in 23S rRNA + S-adenosyl-L-methionine = 2'-O-methyladenosine(1067) in 23S rRNA + S-adenosyl-L-homocysteine + H(+). Its function is as follows. Specifically methylates the adenosine-1067 in 23S ribosomal RNA. Confers resistance to antibiotic thiostrepton. The protein is 23S rRNA (adenosine(1067)-2'-O)-methyltransferase of Streptomyces laurentii.